A 186-amino-acid chain; its full sequence is Peptidyl-tRNA hydrolase (186 aa).

Tyr14 is a binding site for tRNA. His19 serves as the catalytic Proton acceptor. TRNA is bound by residues Tyr64, Asn66, and Asn112.

This sequence belongs to the PTH family. Monomer.

The protein resides in the cytoplasm. It carries out the reaction an N-acyl-L-alpha-aminoacyl-tRNA + H2O = an N-acyl-L-amino acid + a tRNA + H(+). Its function is as follows. Hydrolyzes ribosome-free peptidyl-tRNAs (with 1 or more amino acids incorporated), which drop off the ribosome during protein synthesis, or as a result of ribosome stalling. In terms of biological role, catalyzes the release of premature peptidyl moieties from peptidyl-tRNA molecules trapped in stalled 50S ribosomal subunits, and thus maintains levels of free tRNAs and 50S ribosomes. The sequence is that of Peptidyl-tRNA hydrolase from Mesoplasma florum (strain ATCC 33453 / NBRC 100688 / NCTC 11704 / L1) (Acholeplasma florum).